A 332-amino-acid polypeptide reads, in one-letter code: L-lactate dehydrogenase A chain (332 aa).

Alanine 2 is modified (N-acetylalanine). Position 5 is an N6-acetyllysine; alternate (lysine 5). N6-succinyllysine; alternate is present on lysine 5. Lysine 14 bears the N6-acetyllysine mark. At threonine 18 the chain carries Phosphothreonine. 29 to 57 (GAVGMACAISILMKDLADELALVDVIEDK) is a binding site for NAD(+). Lysine 57 is modified (N6-acetyllysine; alternate). A Glycyl lysine isopeptide (Lys-Gly) (interchain with G-Cter in SUMO2); alternate cross-link involves residue lysine 57. At lysine 81 the chain carries N6-acetyllysine. NAD(+) is bound at residue arginine 99. Arginine 106 lines the substrate pocket. Lysine 118 carries the N6-acetyllysine; alternate modification. Lysine 118 is subject to N6-succinyllysine; alternate. Lysine 126 is modified (N6-acetyllysine). Positions 138 and 169 each coordinate substrate. Histidine 193 (proton acceptor) is an active-site residue. Residues lysine 224 and lysine 232 each carry the N6-acetyllysine modification. Tyrosine 239 is subject to Phosphotyrosine. The residue at position 243 (lysine 243) is an N6-acetyllysine. Residue threonine 248 coordinates substrate. Threonine 309 is modified (phosphothreonine). Position 310 is a phosphoserine (serine 310). Residue lysine 318 is modified to N6-acetyllysine; alternate. Lysine 318 carries the N6-succinyllysine; alternate modification. Phosphothreonine is present on threonine 322.

The protein belongs to the LDH/MDH superfamily. LDH family. In terms of assembly, homotetramer. Interacts with PTEN upstream reading frame protein MP31. In terms of processing, ISGylated.

It is found in the cytoplasm. It carries out the reaction (S)-lactate + NAD(+) = pyruvate + NADH + H(+). It functions in the pathway fermentation; pyruvate fermentation to lactate; (S)-lactate from pyruvate: step 1/1. Interconverts simultaneously and stereospecifically pyruvate and lactate with concomitant interconversion of NADH and NAD(+). This chain is L-lactate dehydrogenase A chain (LDHA), found in Pan troglodytes (Chimpanzee).